The chain runs to 311 residues: Cytochrome f (311 aa).

The signal sequence occupies residues Met1 to Ala27. Heme contacts are provided by Tyr28, Cys48, Cys51, and His52. A helical membrane pass occupies residues Ile277–Lys297.

This sequence belongs to the cytochrome f family. The 4 large subunits of the cytochrome b6-f complex are cytochrome b6, subunit IV (17 kDa polypeptide, PetD), cytochrome f and the Rieske protein, while the 4 small subunits are PetG, PetL, PetM and PetN. The complex functions as a dimer. The cofactor is heme.

The protein resides in the cellular thylakoid membrane. Its function is as follows. Component of the cytochrome b6-f complex, which mediates electron transfer between photosystem II (PSII) and photosystem I (PSI), cyclic electron flow around PSI, and state transitions. The sequence is that of Cytochrome f from Synechococcus sp. (strain CC9902).